A 241-amino-acid polypeptide reads, in one-letter code: Glutathione S-transferase omega-1 (241 aa).

Ser-2 is modified (N-acetylserine). Residues 22–101 enclose the GST N-terminal domain; it reads GLIRVYSMRF…YLDEAYPGKK (80 aa). The Nucleophile role is filled by Cys-32. Lys-57 is subject to N6-acetyllysine. Residues Lys-59, Val-72, and 85–86 contribute to the glutathione site; that span reads ES. The region spanning 106–225 is the GST C-terminal domain; it reads DPYEKACQKM…HIEPRDLRAF (120 aa). Lys-143, Lys-148, and Lys-152 each carry N6-acetyllysine.

Homodimer. Most abundant in the liver and skeletal muscle; also expressed in heart, diaphragm, colon, thymus, kidney, lung, ovaries, spleen, intestine and pancreas.

The protein resides in the cytoplasm. Its subcellular location is the cytosol. It catalyses the reaction RX + glutathione = an S-substituted glutathione + a halide anion + H(+). It carries out the reaction L-dehydroascorbate + 2 glutathione = glutathione disulfide + L-ascorbate. The enzyme catalyses methylarsonate + 2 glutathione + H(+) = methylarsonous acid + glutathione disulfide + H2O. Functionally, exhibits glutathione-dependent thiol transferase and dehydroascorbate reductase activities. Has S-(phenacyl)glutathione reductase activity. Also has glutathione S-transferase activity. Participates in the biotransformation of inorganic arsenic and reduces monomethylarsonic acid (MMA) and dimethylarsonic acid. This is Glutathione S-transferase omega-1 (GSTO1) from Sus scrofa (Pig).